The primary structure comprises 246 residues: Bis(5'-nucleosyl)-tetraphosphatase PrpE [asymmetrical] (246 aa).

It belongs to the PrpE family. It depends on Ni(2+) as a cofactor.

The enzyme catalyses P(1),P(4)-bis(5'-guanosyl) tetraphosphate + H2O = GMP + GTP + 2 H(+). Asymmetrically hydrolyzes Ap4p to yield AMP and ATP. The chain is Bis(5'-nucleosyl)-tetraphosphatase PrpE [asymmetrical] from Bacillus thuringiensis subsp. konkukian (strain 97-27).